Consider the following 229-residue polypeptide: Sec-independent protein translocase protein TatB (229 aa).

A helical transmembrane segment spans residues 1–21 (MFDIGFSELLLFGVIALIVLG). The disordered stretch occupies residues 90 to 131 (EFEHSQSQNLKTSDKAASPANQANNDSAIQNNNEPATFSYAY). The segment covering 108 to 131 (PANQANNDSAIQNNNEPATFSYAY) has biased composition (polar residues).

The protein belongs to the TatB family. As to quaternary structure, the Tat system comprises two distinct complexes: a TatABC complex, containing multiple copies of TatA, TatB and TatC subunits, and a separate TatA complex, containing only TatA subunits. Substrates initially bind to the TatABC complex, which probably triggers association of the separate TatA complex to form the active translocon.

The protein resides in the cell inner membrane. In terms of biological role, part of the twin-arginine translocation (Tat) system that transports large folded proteins containing a characteristic twin-arginine motif in their signal peptide across membranes. Together with TatC, TatB is part of a receptor directly interacting with Tat signal peptides. TatB may form an oligomeric binding site that transiently accommodates folded Tat precursor proteins before their translocation. This Psychrobacter arcticus (strain DSM 17307 / VKM B-2377 / 273-4) protein is Sec-independent protein translocase protein TatB.